A 204-amino-acid polypeptide reads, in one-letter code: Dual-action ribosomal maturation protein DarP (204 aa).

Disordered regions lie at residues 1–31 and 182–204; these read MPPMTRKTRIQPIEPVAEEDDNGYDRPSKSQ and GGASDSDDEAADDAGDDHDDDEA. Residues 186–204 show a composition bias toward acidic residues; the sequence is DSDDEAADDAGDDHDDDEA.

It belongs to the DarP family.

The protein localises to the cytoplasm. Member of a network of 50S ribosomal subunit biogenesis factors which assembles along the 30S-50S interface, preventing incorrect 23S rRNA structures from forming. Promotes peptidyl transferase center (PTC) maturation. In Burkholderia orbicola (strain MC0-3), this protein is Dual-action ribosomal maturation protein DarP.